We begin with the raw amino-acid sequence, 256 residues long: ATP synthase subunit a (256 aa).

Positions 1–8 are cleaved as a propeptide — removed in mature form; it reads MYQFNFIL. A run of 7 helical transmembrane segments spans residues 34-54, 92-112, 121-141, 148-168, 186-206, 209-229, and 230-250; these read ITNI…YHLL, YFPF…IGMV, HFIL…FLGL, FFSL…LVLI, ANIL…YNIM, GILF…FSGL, and ELAI…SYIK.

It belongs to the ATPase A chain family. F-type ATPases have 2 components, CF(1) - the catalytic core - and CF(0) - the membrane proton channel. CF(1) has five subunits: alpha(3), beta(3), gamma(1), delta(1), epsilon(1). CF(0) has three main subunits: a, b and c.

The protein localises to the mitochondrion inner membrane. Functionally, mitochondrial membrane ATP synthase (F(1)F(0) ATP synthase or Complex V) produces ATP from ADP in the presence of a proton gradient across the membrane which is generated by electron transport complexes of the respiratory chain. F-type ATPases consist of two structural domains, F(1) - containing the extramembraneous catalytic core and F(0) - containing the membrane proton channel, linked together by a central stalk and a peripheral stalk. During catalysis, ATP synthesis in the catalytic domain of F(1) is coupled via a rotary mechanism of the central stalk subunits to proton translocation. Key component of the proton channel; it may play a direct role in the translocation of protons across the membrane. The sequence is that of ATP synthase subunit a (atp6) from Emericella nidulans (Aspergillus nidulans).